The chain runs to 882 residues: E3 ubiquitin-protein ligase SH3RF3 (882 aa).

A disordered region spans residues 18-42 (AQSEGDEDRPGERRRRRAAATAAGA). The segment at 57–98 (CSVCLERLDTTAKVLPCQHTFCRRCLESIVCSRHELRCPECR) adopts an RING-type zinc-finger fold. The segment at 124–159 (RPRAGTSPGGSPPARPIPGQSAAPTLAGGGGGAAGS) is disordered. 2 SH3 domains span residues 194–253 (CLLP…CIQP) and 256–319 (HAPP…LNDS). The tract at residues 368–399 (RRVDGKKNTKKRHSFTALSVTHRSSQAASHRH) is disordered. Residues 369–439 (RVDGKKNTKK…APTQDVSSSA (71 aa)) are interaction with RAC1. Ser400 carries the phosphoserine modification. A compositionally biased stretch (polar residues) spans 433–444 (QDVSSSAGSTPT). Residues 433–458 (QDVSSSAGSTPTAVPRAASVSGEQGT) are disordered. An SH3 3 domain is found at 464-525 (LPLNVYLALY…PGNYVTPVSR (62 aa)). Polar residues-rich tracts occupy residues 575-588 (PQAHAQHPTASPPT), 596-635 (AQPTASQARSTISTAAHSAAQAQDRPTATVSPLRTQNSPS), and 697-706 (LSTSSPTNTG). 2 disordered regions span residues 575 to 664 (PQAH…CPRP) and 693 to 747 (PIGV…PTHD). Positions 708 to 721 (KLDEKKSEKKEKKS) are enriched in basic and acidic residues. Ser797 carries the phosphoserine modification. Residues 823–882 (LPRERYRVVVSYPPQSEAEIELKEGDIVFVHKKREDGWYKGTLQRNGRTGLFPGSFVESF) form the SH3 4 domain.

This sequence belongs to the SH3RF family. In terms of assembly, interacts (via SH3 domain 3) with PAK2. Interacts with RAC1 (GTP-bound form). Autoubiquitinated.

It catalyses the reaction S-ubiquitinyl-[E2 ubiquitin-conjugating enzyme]-L-cysteine + [acceptor protein]-L-lysine = [E2 ubiquitin-conjugating enzyme]-L-cysteine + N(6)-ubiquitinyl-[acceptor protein]-L-lysine.. The protein operates within protein modification; protein ubiquitination. In terms of biological role, has E3 ubiquitin-protein ligase activity. This Homo sapiens (Human) protein is E3 ubiquitin-protein ligase SH3RF3 (SH3RF3).